A 228-amino-acid polypeptide reads, in one-letter code: UPF0056 membrane protein MJ0972 (228 aa).

Transmembrane regions (helical) follow at residues 22-42 (FYIY…LIPI), 68-88 (VVLL…GITI), 133-153 (VPLA…MILI), 163-183 (GVVV…LSLT), and 201-221 (IMGL…IVGL).

This sequence belongs to the UPF0056 (MarC) family.

Its subcellular location is the cell membrane. The polypeptide is UPF0056 membrane protein MJ0972 (Methanocaldococcus jannaschii (strain ATCC 43067 / DSM 2661 / JAL-1 / JCM 10045 / NBRC 100440) (Methanococcus jannaschii)).